A 660-amino-acid polypeptide reads, in one-letter code: FAST kinase domain-containing protein 3, mitochondrial (660 aa).

The transit peptide at 1–57 directs the protein to the mitochondrion; that stretch reads MALVTLRRNLYHLSDFRIHGALAALKTQQVNHVHKTVKEHLCPWFWSQHPGPIRVRF. The region spanning 591 to 649 is the RAP domain; that stretch reads VALCIDGPKRFCLNSKHLLGKEATKQRHLRLLGYQVVQIPYYEIEMLKSRLELVDYLQG.

Belongs to the FAST kinase family.

Its subcellular location is the mitochondrion. In terms of biological role, required for normal mitochondrial respiration. Increases steady-state levels and half-lives of a subset of mature mitochondrial mRNAs MT-ND2, MT-ND3, MT-CYTB, MT-CO2, and MT-ATP8/6. Promotes MT-CO1 mRNA translation and increases mitochondrial complex IV assembly and activity. The chain is FAST kinase domain-containing protein 3, mitochondrial (FASTKD3) from Bos taurus (Bovine).